The primary structure comprises 143 residues: Transcriptional regulator MraZ (143 aa).

2 consecutive SpoVT-AbrB domains span residues 5-47 (TYTP…PRDE) and 76-119 (TDEQ…DAQA).

This sequence belongs to the MraZ family. As to quaternary structure, forms oligomers.

The protein resides in the cytoplasm. It is found in the nucleoid. This chain is Transcriptional regulator MraZ, found in Mycolicibacterium smegmatis (strain ATCC 700084 / mc(2)155) (Mycobacterium smegmatis).